We begin with the raw amino-acid sequence, 232 residues long: uncharacterized protein (232 aa).

Residues 1-71 (MSNPTIEGDE…KENERIKNDD (71 aa)) are disordered. Positions 25 to 38 (DDLDDLDDILDDLD) are enriched in acidic residues. Residues 44 to 71 (KNEEKKNIDEHKQTGNTSKENERIKNDD) are compositionally biased toward basic and acidic residues.

This is an uncharacterized protein from Schizosaccharomyces pombe (strain 972 / ATCC 24843) (Fission yeast).